The chain runs to 51 residues: ATP synthase subunit epsilon-like protein, mitochondrial (51 aa).

Lys-21 carries the N6-acetyllysine modification.

The protein belongs to the eukaryotic ATPase epsilon family. As to quaternary structure, F-type ATPases have 2 components, CF(1) - the catalytic core - and CF(0) - the membrane proton channel. CF(1) has five subunits: alpha(3), beta(3), gamma(1), delta(1), epsilon(1). CF(0) seems to have nine subunits: a, b, c, d, e, f, g, F6 and 8 (or A6L).

The protein localises to the mitochondrion inner membrane. In terms of biological role, mitochondrial membrane ATP synthase (F(1)F(0) ATP synthase or Complex V) produces ATP from ADP in the presence of a proton gradient across the membrane which is generated by electron transport complexes of the respiratory chain. F-type ATPases consist of two structural domains, F(1) - containing the extramembraneous catalytic core, and F(0) - containing the membrane proton channel, linked together by a central stalk and a peripheral stalk. During catalysis, ATP synthesis in the catalytic domain of F(1) is coupled via a rotary mechanism of the central stalk subunits to proton translocation. Part of the complex F(1) domain and of the central stalk which is part of the complex rotary element. Rotation of the central stalk against the surrounding alpha(3)beta(3) subunits leads to hydrolysis of ATP in three separate catalytic sites on the beta subunits. The chain is ATP synthase subunit epsilon-like protein, mitochondrial from Homo sapiens (Human).